A 104-amino-acid polypeptide reads, in one-letter code: Large ribosomal subunit protein bL21 (104 aa).

The protein belongs to the bacterial ribosomal protein bL21 family. In terms of assembly, part of the 50S ribosomal subunit. Contacts protein L20.

Its function is as follows. This protein binds to 23S rRNA in the presence of protein L20. This is Large ribosomal subunit protein bL21 from Streptococcus equi subsp. equi (strain 4047).